The chain runs to 81 residues: Photosystem I iron-sulfur center (81 aa).

4Fe-4S ferredoxin-type domains follow at residues 2–31 and 39–68; these read AHAV…MIPW and IASA…VRVY. The [4Fe-4S] cluster site is built by Cys-11, Cys-14, Cys-17, Cys-21, Cys-48, Cys-51, Cys-54, and Cys-58.

As to quaternary structure, the eukaryotic PSI reaction center is composed of at least 11 subunits. It depends on [4Fe-4S] cluster as a cofactor.

The protein resides in the plastid. Its subcellular location is the chloroplast thylakoid membrane. It catalyses the reaction reduced [plastocyanin] + hnu + oxidized [2Fe-2S]-[ferredoxin] = oxidized [plastocyanin] + reduced [2Fe-2S]-[ferredoxin]. Its function is as follows. Apoprotein for the two 4Fe-4S centers FA and FB of photosystem I (PSI); essential for photochemical activity. FB is the terminal electron acceptor of PSI, donating electrons to ferredoxin. The C-terminus interacts with PsaA/B/D and helps assemble the protein into the PSI complex. Required for binding of PsaD and PsaE to PSI. PSI is a plastocyanin-ferredoxin oxidoreductase, converting photonic excitation into a charge separation, which transfers an electron from the donor P700 chlorophyll pair to the spectroscopically characterized acceptors A0, A1, FX, FA and FB in turn. This Marchantia polymorpha (Common liverwort) protein is Photosystem I iron-sulfur center.